The primary structure comprises 1207 residues: Stress response protein NST1 (1207 aa).

Disordered regions lie at residues 1 to 58 (MGLD…EETH), 248 to 284 (HNKQ…LPER), 398 to 420 (LDMS…DTDE), 451 to 535 (SNKN…DYDS), 586 to 735 (EQQK…DNLH), 1124 to 1148 (APAA…SDPV), and 1163 to 1183 (TSTG…GQPS). The segment covering 7-16 (TVVTGQNVQF) has biased composition (polar residues). Residues 25-36 (KKSRNKKKKSKP) show a composition bias toward basic residues. The segment covering 252 to 262 (RQYSEQQRKQQ) has biased composition (low complexity). Residues 469–507 (EDSEYDEDLNYSDSYDDEDSPYDDDVYDDNDAESYDEDD) are compositionally biased toward acidic residues. Positions 511 to 523 (HKHHHQQHLHHHH) are enriched in basic residues. A coiled-coil region spans residues 564–727 (VSYQEKQAER…REEDDKPTEE (164 aa)). A compositionally biased stretch (basic and acidic residues) spans 586-721 (EQQKKEKEEK…LEVKKKREED (136 aa)). Low complexity predominate over residues 1163–1176 (TSTGSTSSATPTGS).

This sequence belongs to the NST1 family.

The protein resides in the cytoplasm. May act as a negative regulator of salt tolerance. The protein is Stress response protein NST1 (NST1) of Eremothecium gossypii (strain ATCC 10895 / CBS 109.51 / FGSC 9923 / NRRL Y-1056) (Yeast).